The sequence spans 230 residues: Somatolactin (230 aa).

An N-terminal signal peptide occupies residues 1-23 (MIKTKVLQAWMGIWLCAVNGLLG). Cystine bridges form between cysteine 28/cysteine 38, cysteine 87/cysteine 202, and cysteine 219/cysteine 227. A glycan (N-linked (GlcNAc...) asparagine) is linked at asparagine 177.

It belongs to the somatotropin/prolactin family.

It localises to the secreted. The sequence is that of Somatolactin from Ictalurus punctatus (Channel catfish).